The following is an 87-amino-acid chain: RNA-binding protein Hfq (87 aa).

Positions 9-68 constitute a Sm domain; sequence DPFLNALRRERIPVSIFLVNGIKLQGKIQSFDQFVILLENTVNQMVYKHAISTVVPARAV.

Belongs to the Hfq family. As to quaternary structure, homohexamer.

In terms of biological role, RNA chaperone that binds small regulatory RNA (sRNAs) and mRNAs to facilitate mRNA translational regulation in response to envelope stress, environmental stress and changes in metabolite concentrations. Also binds with high specificity to tRNAs. The protein is RNA-binding protein Hfq of Pseudoalteromonas translucida (strain TAC 125).